The following is a 1232-amino-acid chain: DNA-directed RNA polymerase subunit beta (1232 aa).

A disordered region spans residues 1170-1232 (SVDEDADELE…LDLDDFGDEH (63 aa)). Acidic residues predominate over residues 1171-1180 (VDEDADELEV). The span at 1189 to 1198 (PEEKEEKEKE) shows a compositional bias: basic and acidic residues. Acidic residues predominate over residues 1199 to 1232 (DSDEYDDLREEDVEPDLEELSLDDLDLDDFGDEH).

Belongs to the RNA polymerase beta chain family. As to quaternary structure, the RNAP catalytic core consists of 2 alpha, 1 beta, 1 beta' and 1 omega subunit. When a sigma factor is associated with the core the holoenzyme is formed, which can initiate transcription.

The enzyme catalyses RNA(n) + a ribonucleoside 5'-triphosphate = RNA(n+1) + diphosphate. In terms of biological role, DNA-dependent RNA polymerase catalyzes the transcription of DNA into RNA using the four ribonucleoside triphosphates as substrates. This chain is DNA-directed RNA polymerase subunit beta, found in Clostridium botulinum (strain Kyoto / Type A2).